The following is a 118-amino-acid chain: MDFQFTSHLGSIMAKCSMGHEAIANWFNSEVRSDSAKIQTVLQQLQTGKTQQDITLIGTEYSVFINQEEVMVRANNLMLEHDQPLEDDFHYYDEESIAFCGTDDFIHFLQSALAFIQS.

It belongs to the UPF0231 family.

This Pasteurella multocida (strain Pm70) protein is UPF0231 protein PM0457.